A 185-amino-acid polypeptide reads, in one-letter code: MNKQKGLSVKSVVAIGIGAAIYVILARFTSIPTGIPNTNIEIVYPFLALLATIYGPVVGFSVGFIGHALGDFLMYGQTWWSWVLATAVLGLIIGLYGMRLDLDNGVFTVKQMVGFNVVQIIANVISWLLIAPVGDILIYSEPQNKVFLQGATATITNSLSILILGTILLKAYAATKVKKGSLRKD.

The next 5 helical transmembrane spans lie at 6–26 (GLSV…VILA), 46–66 (FLAL…GFIG), 78–98 (TWWS…LYGM), 118–138 (VQII…DILI), and 147–167 (FLQG…LGTI).

The protein belongs to the UPF0397 family.

The protein localises to the cell membrane. The chain is UPF0397 protein LGAS_1499 from Lactobacillus gasseri (strain ATCC 33323 / DSM 20243 / BCRC 14619 / CIP 102991 / JCM 1131 / KCTC 3163 / NCIMB 11718 / NCTC 13722 / AM63).